The sequence spans 174 residues: MSAPPPLQIREANAHLAAVHRRAAELERRLLAAERTIGAQAERLACHDQHLRAALDELGRAKDREISALQEQLLSSEATVRSLQAAVDQRDQMIQQLQPRADLLQDITRHRPPLAALLATLEEAEELGPLPASHSHRAQLLPDGPGPPLGNNMGKEEGQDDQDDQQPAVFGTTV.

Residues 7 to 97 are a coiled coil; sequence LQIREANAHL…DQRDQMIQQL (91 aa). Positions 128–174 are disordered; sequence GPLPASHSHRAQLLPDGPGPPLGNNMGKEEGQDDQDDQQPAVFGTTV.

It is found in the cytoplasm. The polypeptide is Vimentin-type intermediate filament-associated coiled-coil protein (Vmac) (Mus musculus (Mouse)).